Consider the following 145-residue polypeptide: Globin (145 aa).

The residue at position 2 (Ser-2) is an N-acetylserine. Residues 2–145 (SLSAAEADLV…IVAALKAAGK (144 aa)) enclose the Globin domain. His-96 is a binding site for heme b.

This sequence belongs to the globin family. In terms of assembly, monomer.

The chain is Globin from Aplysia kurodai (Kuroda's sea hare).